A 191-amino-acid polypeptide reads, in one-letter code: GTP-binding protein CIN4 (191 aa).

GTP is bound by residues 23–30, 69–73, and 131–134; these read GLDNSGKS, DIGGQ, and NKID.

Implicated in yeast microtubule function. This is GTP-binding protein CIN4 (CIN4) from Saccharomyces cerevisiae (strain ATCC 204508 / S288c) (Baker's yeast).